Here is a 378-residue protein sequence, read N- to C-terminus: N-acetyldiaminopimelate deacetylase (378 aa).

Asp-72 is a catalytic residue. The Proton acceptor role is filled by Glu-131.

Belongs to the peptidase M20A family. N-acetyldiaminopimelate deacetylase subfamily.

The catalysed reaction is N-acetyl-(2S,6S)-2,6-diaminopimelate + H2O = (2S,6S)-2,6-diaminopimelate + acetate. It functions in the pathway amino-acid biosynthesis; L-lysine biosynthesis via DAP pathway; LL-2,6-diaminopimelate from (S)-tetrahydrodipicolinate (acetylase route): step 3/3. In terms of biological role, catalyzes the conversion of N-acetyl-diaminopimelate to diaminopimelate and acetate. This Enterococcus faecalis (strain ATCC 700802 / V583) protein is N-acetyldiaminopimelate deacetylase.